Here is an 853-residue protein sequence, read N- to C-terminus: E3 ubiquitin-protein ligase RNF216 (853 aa).

Disordered stretches follow at residues threonine 33–valine 102, proline 125–aspartate 152, and proline 165–leucine 228. Over residues glutamine 53–tyrosine 73 the composition is skewed to acidic residues. Lysine 89 is covalently cross-linked (Glycyl lysine isopeptide (Lys-Gly) (interchain with G-Cter in SUMO2)). Residues lysine 339 and lysine 342 each participate in a glycyl lysine isopeptide (Lys-Gly) (interchain with G-Cter in SUMO2) cross-link. The residue at position 407 (serine 407) is a Phosphoserine. Glycyl lysine isopeptide (Lys-Gly) (interchain with G-Cter in SUMO2) cross-links involve residues lysine 413, lysine 418, lysine 436, lysine 447, and lysine 473. The stretch at valine 463–glutamate 479 forms a coiled coil. The segment at glutamine 499 to serine 716 is TRIAD supradomain. Positions 503, 506, 525, 528, 593, and 596 each coordinate Zn(2+). The RING-type 1 zinc finger occupies cysteine 503 to cysteine 552. The IBR-type zinc-finger motif lies at tyrosine 571–cysteine 636. Lysine 607 participates in a covalent cross-link: Glycyl lysine isopeptide (Lys-Gly) (interchain with G-Cter in SUMO2). Zn(2+)-binding residues include cysteine 611, cysteine 616, cysteine 621, cysteine 624, histidine 631, and cysteine 636. Glycyl lysine isopeptide (Lys-Gly) (interchain with G-Cter in SUMO2) cross-links involve residues lysine 646 and lysine 654. Positions 663 and 666 each coordinate Zn(2+). The RING-type 2; atypical zinc-finger motif lies at cysteine 663–cysteine 691. Residue cysteine 676 is part of the active site. Residues cysteine 681, cysteine 683, cysteine 688, cysteine 691, histidine 704, and cysteine 712 each coordinate Zn(2+). A coiled-coil region spans residues threonine 725–threonine 751. Glycyl lysine isopeptide (Lys-Gly) (interchain with G-Cter in SUMO2) cross-links involve residues lysine 753 and lysine 761.

Interacts with UBE2L3 and to some extent with UBE2L6. Interacts with TRAF3, TLR3, TLR4, TLR5 and TLR9. Isoform 3/ZIN binds RIPK1. Post-translationally, auto-ubiquitinated. Phosphorylation at Ser-719 enhances acceptor ubiquitin binding and chain-type specificity towards 'Lys-63' di-ubiquitin but not di-ubiquitin with other linkage types.

Its subcellular location is the cytoplasm. The protein localises to the cytoplasmic vesicle. It is found in the clathrin-coated vesicle. The enzyme catalyses S-ubiquitinyl-[E2 ubiquitin-conjugating enzyme]-L-cysteine + [acceptor protein]-L-lysine = [E2 ubiquitin-conjugating enzyme]-L-cysteine + N(6)-ubiquitinyl-[acceptor protein]-L-lysine.. It functions in the pathway protein modification; protein ubiquitination. With respect to regulation, allosterically activated by 'Lys-63'-linked di-ubiquitin. In terms of biological role, E3 ubiquitin ligase which accepts ubiquitin from specific E2 ubiquitin-conjugating enzymes, and then transfers it to substrates promoting their ubiquitination. Plays a role in the regulation of antiviral responses by promoting the degradation of TRAF3, TLR4 and TLR9. In turn, down-regulates NF-kappa-B and IRF3 activation as well as beta interferon production. Also participates in the regulation of autophagy by ubiquitinating BECN1 leading to its degradation and autophagy inhibition. Plays a role in ARC-dependent synaptic plasticity by mediating ARC ubiquitination resulting in its rapid proteasomal degradation. Plays aso an essential role in spermatogenesis and male fertility. Mechanistically, regulates meiosis by promoting the degradation of PRKACB through the ubiquitin-mediated lysosome pathway. Modulates the gonadotropin-releasing hormone signal pathway by affecting the stability of STAU2 that is required for the microtubule-dependent transport of neuronal RNA from the cell body to the dendrite. The polypeptide is E3 ubiquitin-protein ligase RNF216 (Rnf216) (Mus musculus (Mouse)).